The sequence spans 399 residues: Unsaturated chondroitin disaccharide hydrolase (399 aa).

Catalysis depends on D116, which acts as the Nucleophile. Residues D116, D176, G234, T236, R248, W252, S366, and S369 each contribute to the substrate site. D176 serves as the catalytic Proton donor.

The protein belongs to the glycosyl hydrolase 88 family. In terms of assembly, monomer.

It carries out the reaction beta-D-4-deoxy-Delta(4)-GlcpA-(1-&gt;3)-beta-D-GalpNAc6S + H2O = N-acetyl-beta-D-galactosamine 6-sulfate + 5-dehydro-4-deoxy-D-glucuronate. Functionally, catalyzes the hydrolysis of unsaturated hyaluronate and chondroitin disaccharides. Also degrades unsaturated heparin disaccharides. Releases 4-deoxy-4,5-didehydro D-glucuronic acid or 4-deoxy-4,5-didehydro L-iduronic acid from chondroitin disaccharides, hyaluronan disaccharides and heparin disaccharides and cleaves both glycosidic (1-&gt;3) and (1-&gt;4) bonds. Prefers sulfated glycosaminoglycans compared to unsulfated glycosaminoglycans. Probably required for mammalian cells invasion through the degradation of extracellular sulfated glycosaminoglycans such as chondroitin and hyaluronan. The polypeptide is Unsaturated chondroitin disaccharide hydrolase (ugl) (Streptococcus pyogenes serotype M1).